Reading from the N-terminus, the 440-residue chain is Calcium/calmodulin-regulated receptor-like kinase 1 (440 aa).

The helical transmembrane segment at 8–28 (LIVGISLGLVIGVVLAISALF) threads the bilayer. Positions 28–228 (FCFRYHRKKS…ARGLEYLHDG (201 aa)) are calmodulin binding. The Protein kinase domain maps to 113 to 380 (CNFTTLIGQG…DIVQVLTRVI (268 aa)). Residues 119–127 (IGQGAFGPV) and Lys-141 each bind ATP. Tyr-186 carries the phosphotyrosine modification. The active-site Proton acceptor is the Asp-237. Ser-241 bears the Phosphoserine mark. Thr-274 carries the post-translational modification Phosphothreonine. Tyr-282 is modified (phosphotyrosine). Positions 369–440 (MRDIVQVLTR…DSSIAEDVIL (72 aa)) are calmodulin binding. The segment at 386 to 427 (RKRQKNSPSPSPRLPPPPPIVEESEGELTANGSLRSEIHRRD) is disordered. The segment covering 394–405 (SPSPRLPPPPPI) has biased composition (pro residues).

This sequence belongs to the protein kinase superfamily. Ser/Thr protein kinase family. In terms of assembly, interacts with calmodulin (CaM) in a calcium- (Ca(2+)-) dependent manner. Binds to MEKK1. In terms of tissue distribution, similar transcript expression levels in seedlings, roots, leaves, stems and flowers, and lower levels in siliques, but protein accumulates mostly in 7-day-old seedlings, old roots and young leaves and, to a lower extent, in young roots, old leaves, flowers and siliques (at protein level).

Its subcellular location is the cell membrane. It is found in the endosome membrane. The catalysed reaction is L-seryl-[protein] + ATP = O-phospho-L-seryl-[protein] + ADP + H(+). It catalyses the reaction L-threonyl-[protein] + ATP = O-phospho-L-threonyl-[protein] + ADP + H(+). With respect to regulation, kinase activity is stimulated by calcium/calmodulin, but blocked by chlorpromazine. In terms of biological role, required for cold tolerance, via the activation of MAP kinases activity. Phosphorylates and activates MEKK1 in response to cold in a calcium-dependent manner. The polypeptide is Calcium/calmodulin-regulated receptor-like kinase 1 (Arabidopsis thaliana (Mouse-ear cress)).